Consider the following 423-residue polypeptide: MDQITEFQLDINRALKETLALVLAGGRGSRLRDLTNRESKPAVPFGGKYRIIDFPLSNCMNSGIRRMCVITQYRAHTLIHHIQRGWGFLRAEIGEFVELWPAQQQTDKESWYLGTADAVHQNLDLIRMHDPRFVLILAGDHIYKQDYSKLLAHHIARGSDCTVACVDVPREEATGYGCVEVDNDDNIVHFLEKPANPPGIPGRPDRAFASMGIYIFNADFLYEILESDALNEASQHDFGRDIIPSQVGKARIVAHRFSQSCVYSVGRREPYWRDVGTVDAYWSANIDLVSVTPALDLYDADWPIWTYQMQRPPAKFVFDTDERRGMAKDSLVSAGCIVSGGAVTGSLLFNDVRVNSYSSVIDTVILPMGDIGRHARLTKCILDTGCRIPEGLVIGEDPILDAKRFHVTEQGITLVTPDRLALL.

Residues Tyr112, Gly177, 192-193, and Ser210 contribute to the alpha-D-glucose 1-phosphate site; that span reads EK.

Belongs to the bacterial/plant glucose-1-phosphate adenylyltransferase family. In terms of assembly, homotetramer.

It catalyses the reaction alpha-D-glucose 1-phosphate + ATP + H(+) = ADP-alpha-D-glucose + diphosphate. Its pathway is glycan biosynthesis; glycogen biosynthesis. Involved in the biosynthesis of ADP-glucose, a building block required for the elongation reactions to produce glycogen. Catalyzes the reaction between ATP and alpha-D-glucose 1-phosphate (G1P) to produce pyrophosphate and ADP-Glc. In Rhodospirillum rubrum (strain ATCC 11170 / ATH 1.1.1 / DSM 467 / LMG 4362 / NCIMB 8255 / S1), this protein is Glucose-1-phosphate adenylyltransferase.